The sequence spans 318 residues: Biotin synthase (318 aa).

The Radical SAM core domain occupies 44-273; the sequence is LCGKKFNLCT…EKQIRLAGGR (230 aa). 3 residues coordinate [4Fe-4S] cluster: Cys62, Cys66, and Cys69. [2Fe-2S] cluster is bound by residues Ser106, Cys138, Cys198, and Arg268.

This sequence belongs to the radical SAM superfamily. Biotin synthase family. In terms of assembly, homodimer. It depends on [4Fe-4S] cluster as a cofactor. [2Fe-2S] cluster serves as cofactor.

It catalyses the reaction (4R,5S)-dethiobiotin + (sulfur carrier)-SH + 2 reduced [2Fe-2S]-[ferredoxin] + 2 S-adenosyl-L-methionine = (sulfur carrier)-H + biotin + 2 5'-deoxyadenosine + 2 L-methionine + 2 oxidized [2Fe-2S]-[ferredoxin]. It functions in the pathway cofactor biosynthesis; biotin biosynthesis; biotin from 7,8-diaminononanoate: step 2/2. In terms of biological role, catalyzes the conversion of dethiobiotin (DTB) to biotin by the insertion of a sulfur atom into dethiobiotin via a radical-based mechanism. In Clostridium botulinum (strain Alaska E43 / Type E3), this protein is Biotin synthase.